The chain runs to 353 residues: Quinolinate synthase (353 aa).

Iminosuccinate contacts are provided by His-47 and Ser-68. Cys-113 is a [4Fe-4S] cluster binding site. Iminosuccinate-binding positions include 139–141 and Ser-156; that span reads YAN. Cys-200 provides a ligand contact to [4Fe-4S] cluster. Iminosuccinate contacts are provided by residues 226-228 and Thr-243; that span reads HPE. Residue Cys-297 coordinates [4Fe-4S] cluster.

Belongs to the quinolinate synthase family. Type 1 subfamily. [4Fe-4S] cluster is required as a cofactor.

It is found in the cytoplasm. It catalyses the reaction iminosuccinate + dihydroxyacetone phosphate = quinolinate + phosphate + 2 H2O + H(+). It functions in the pathway cofactor biosynthesis; NAD(+) biosynthesis; quinolinate from iminoaspartate: step 1/1. Its function is as follows. Catalyzes the condensation of iminoaspartate with dihydroxyacetone phosphate to form quinolinate. This Photobacterium profundum (strain SS9) protein is Quinolinate synthase.